A 286-amino-acid polypeptide reads, in one-letter code: Polyamine aminopropyltransferase (286 aa).

Residues 5 to 238 enclose the PABS domain; sequence KIWHEKLHRH…GTMMFSWGTD (234 aa). Residues His-64 and Asp-88 each coordinate spermidine. S-methyl-5'-thioadenosine-binding positions include Glu-108 and 140–141; that span reads NG. Asp-158 acts as the Proton acceptor in catalysis. 158-161 is a spermidine binding site; sequence DSTD.

The protein belongs to the spermidine/spermine synthase family. Homodimer or homotetramer.

The protein resides in the cytoplasm. It catalyses the reaction S-adenosyl 3-(methylsulfanyl)propylamine + putrescine = S-methyl-5'-thioadenosine + spermidine + H(+). The protein operates within amine and polyamine biosynthesis; spermidine biosynthesis; spermidine from putrescine: step 1/1. Functionally, catalyzes the irreversible transfer of a propylamine group from the amino donor S-adenosylmethioninamine (decarboxy-AdoMet) to putrescine (1,4-diaminobutane) to yield spermidine. The sequence is that of Polyamine aminopropyltransferase from Buchnera aphidicola subsp. Schizaphis graminum (strain Sg).